The primary structure comprises 148 residues: Proteasome chaperone 4 (148 aa).

This sequence belongs to the PSMG4 family. In terms of assembly, component of the 20S proteasome chaperone. Forms a heterodimer with IRC25 that binds to proteasome precursors. Interacts with POP2.

It localises to the cytoplasm. Involved in 20S proteasome assembly, facilitating the alpha-ring formation. Involved in maintenance of telomere length. This chain is Proteasome chaperone 4 (POC4), found in Saccharomyces cerevisiae (strain ATCC 204508 / S288c) (Baker's yeast).